A 153-amino-acid chain; its full sequence is SsrA-binding protein (153 aa).

Belongs to the SmpB family.

The protein resides in the cytoplasm. Functionally, required for rescue of stalled ribosomes mediated by trans-translation. Binds to transfer-messenger RNA (tmRNA), required for stable association of tmRNA with ribosomes. tmRNA and SmpB together mimic tRNA shape, replacing the anticodon stem-loop with SmpB. tmRNA is encoded by the ssrA gene; the 2 termini fold to resemble tRNA(Ala) and it encodes a 'tag peptide', a short internal open reading frame. During trans-translation Ala-aminoacylated tmRNA acts like a tRNA, entering the A-site of stalled ribosomes, displacing the stalled mRNA. The ribosome then switches to translate the ORF on the tmRNA; the nascent peptide is terminated with the 'tag peptide' encoded by the tmRNA and targeted for degradation. The ribosome is freed to recommence translation, which seems to be the essential function of trans-translation. This chain is SsrA-binding protein, found in Pelotomaculum thermopropionicum (strain DSM 13744 / JCM 10971 / SI).